Here is a 376-residue protein sequence, read N- to C-terminus: Chaperone protein DnaJ (376 aa).

In terms of domain architecture, J spans 5 to 70; sequence DFYEVLGVGR…DKKAAYDQFG (66 aa). The segment at 132-210 adopts a CR-type zinc-finger fold; the sequence is GLTKELRIPT…CHGEGRVEKS (79 aa). Residues cysteine 145, cysteine 148, cysteine 162, cysteine 165, cysteine 184, cysteine 187, cysteine 198, and cysteine 201 each contribute to the Zn(2+) site. 4 CXXCXGXG motif repeats span residues 145–152, 162–169, 184–191, and 198–205; these read CDACDGSG, CGTCHGQG, CPTCHGRG, and CNKCHGEG.

This sequence belongs to the DnaJ family. In terms of assembly, homodimer. It depends on Zn(2+) as a cofactor.

The protein localises to the cytoplasm. In terms of biological role, participates actively in the response to hyperosmotic and heat shock by preventing the aggregation of stress-denatured proteins and by disaggregating proteins, also in an autonomous, DnaK-independent fashion. Unfolded proteins bind initially to DnaJ; upon interaction with the DnaJ-bound protein, DnaK hydrolyzes its bound ATP, resulting in the formation of a stable complex. GrpE releases ADP from DnaK; ATP binding to DnaK triggers the release of the substrate protein, thus completing the reaction cycle. Several rounds of ATP-dependent interactions between DnaJ, DnaK and GrpE are required for fully efficient folding. Also involved, together with DnaK and GrpE, in the DNA replication of plasmids through activation of initiation proteins. This is Chaperone protein DnaJ from Shewanella halifaxensis (strain HAW-EB4).